A 459-amino-acid chain; its full sequence is MQDSHAWSGRFSEPVSELVKHYTASIGFDYRLAEVDIEGSLAHAAMLNRSGVLSDADLEAIRRGMADILDEIRAGKLEWSVDLEDVHMNIERRLTDRIGDAGKRLHTGRSRNDQVATDIRLWLRGEIDATVHLLAGLQSSLLELAERHADTVMPGFTHLQVAQPVTFGHHLLAYVEMLARDAERMLDCRKRVNRLPLGAAALAGTTYPIDRHYTAQLLGFDDVCHNSLDAVSDRDFAIEFTAAASLAMLHLSRLSEELILWMSPRVGFIDIADRFCTGSSIMPQKKNPDVPELVRGKSGRVVGHLIALITLMKAQPLAYNKDNQEDKEPLFDTVDTLQTTLRIYADMMRGVTVKPEAMRAAVLQGYATATDLADYLVKKGLPFRDSHEVVALAVRHAEGLGVDLADLPLAKLREFSALIEDDVFGVLTPEGSLAQRDHVGGTAPAQVRAQIARHRGRLG.

It belongs to the lyase 1 family. Argininosuccinate lyase subfamily.

The protein localises to the cytoplasm. It catalyses the reaction 2-(N(omega)-L-arginino)succinate = fumarate + L-arginine. The protein operates within amino-acid biosynthesis; L-arginine biosynthesis; L-arginine from L-ornithine and carbamoyl phosphate: step 3/3. The sequence is that of Argininosuccinate lyase from Chromobacterium violaceum (strain ATCC 12472 / DSM 30191 / JCM 1249 / CCUG 213 / NBRC 12614 / NCIMB 9131 / NCTC 9757 / MK).